The primary structure comprises 336 residues: Cell division protein ZipA (336 aa).

The Periplasmic segment spans residues 1–6; it reads MMQDLR. Residues 7 to 27 traverse the membrane as a helical segment; the sequence is LILIVVGAIAIIALLLHGLWT. Over 28–336 the chain is Cytoplasmic; the sequence is SRKERSSLFR…RIRDVLKANA (309 aa). Over residues 40–51 the composition is skewed to basic and acidic residues; the sequence is PVKRAKKARDET. The tract at residues 40-190 is disordered; it reads PVKRAKKARD…APAQPQQPAE (151 aa). Positions 76–89 are enriched in low complexity; sequence SFSSSSFDNASFDN. A compositionally biased stretch (polar residues) spans 126 to 138; the sequence is PRSQVRGDSNPQV. The span at 179–190 shows a compositional bias: low complexity; it reads QPAPAQPQQPAE.

The protein belongs to the ZipA family. In terms of assembly, interacts with FtsZ via their C-terminal domains.

It is found in the cell inner membrane. Its function is as follows. Essential cell division protein that stabilizes the FtsZ protofilaments by cross-linking them and that serves as a cytoplasmic membrane anchor for the Z ring. Also required for the recruitment to the septal ring of downstream cell division proteins. The polypeptide is Cell division protein ZipA (Pectobacterium carotovorum subsp. carotovorum (strain PC1)).